A 141-amino-acid polypeptide reads, in one-letter code: Protein X (141 aa).

Residues 24 to 48 (QSSGPPFPRPSAGSAASPASSLSAS) are compositionally biased toward low complexity. The segment at 24–51 (QSSGPPFPRPSAGSAASPASSLSASDES) is disordered. The segment at 68 to 113 (PCCLVVTCAELRTMDSTVNFVSWHANRQLGMPSKDLWTPYIRDQLL) is mitochondrial targeting sequence.

Belongs to the orthohepadnavirus protein X family. As to quaternary structure, may form homodimer. May interact with host CEBPA, CFLAR, CREB1, DDB1, E4F1, HBXIP, HSPD1/HSP60, NFKBIA, POLR2E and SMAD4. Interacts with host SMC5-SMC6 complex and induces its degradation. Interacts with host TRPC4AP; leading to prevent ubiquitination of TRPC4AP. Interacts with host PLSCR1; this interaction promotes ubiquitination and degradation of HBx and impairs HBx-mediated cell proliferation. Post-translationally, a fraction may be phosphorylated in insect cells and HepG2 cells, a human hepatoblastoma cell line. Phosphorylated in vitro by host protein kinase C or mitogen-activated protein kinase. N-acetylated in insect cells.

It is found in the host cytoplasm. The protein resides in the host nucleus. It localises to the host mitochondrion. Multifunctional protein that plays a role in silencing host antiviral defenses and promoting viral transcription. Does not seem to be essential for HBV infection. May be directly involved in development of cirrhosis and liver cancer (hepatocellular carcinoma). Most of cytosolic activities involve modulation of cytosolic calcium. The effect on apoptosis is controversial depending on the cell types in which the studies have been conducted. May induce apoptosis by localizing in mitochondria and causing loss of mitochondrial membrane potential. May also modulate apoptosis by binding host CFLAR, a key regulator of the death-inducing signaling complex (DISC). Promotes viral transcription by using the host E3 ubiquitin ligase DDB1 to target the SMC5-SMC6 complex to proteasomal degradation. This host complex would otherwise bind to viral episomal DNA, and prevents its transcription. Moderately stimulates transcription of many different viral and cellular transcription elements. Promoters and enhancers stimulated by HBx contain DNA binding sites for NF-kappa-B, AP-1, AP-2, c-EBP, ATF/CREB, or the calcium-activated factor NF-AT. This is Protein X from Woodchuck hepatitis B virus (isolate 1) (WHV).